Reading from the N-terminus, the 506-residue chain is ATP synthase subunit alpha, chloroplastic (506 aa).

170 to 177 (GDRQTGKT) is a binding site for ATP.

It belongs to the ATPase alpha/beta chains family. F-type ATPases have 2 components, CF(1) - the catalytic core - and CF(0) - the membrane proton channel. CF(1) has five subunits: alpha(3), beta(3), gamma(1), delta(1), epsilon(1). CF(0) has four main subunits: a, b, b' and c.

It localises to the plastid. The protein localises to the chloroplast thylakoid membrane. It carries out the reaction ATP + H2O + 4 H(+)(in) = ADP + phosphate + 5 H(+)(out). Its function is as follows. Produces ATP from ADP in the presence of a proton gradient across the membrane. The alpha chain is a regulatory subunit. The polypeptide is ATP synthase subunit alpha, chloroplastic (Euglena gracilis).